The chain runs to 213 residues: Chloramphenicol acetyltransferase 2 (213 aa).

Histidine 189 (proton acceptor) is an active-site residue.

It belongs to the chloramphenicol acetyltransferase family. In terms of assembly, homotrimer.

The catalysed reaction is chloramphenicol + acetyl-CoA = chloramphenicol 3-acetate + CoA. Its function is as follows. This enzyme is an effector of chloramphenicol resistance in bacteria. The chain is Chloramphenicol acetyltransferase 2 (cat-IIH) from Haemophilus influenzae.